Here is a 689-residue protein sequence, read N- to C-terminus: Glycine--tRNA ligase beta subunit (689 aa).

It belongs to the class-II aminoacyl-tRNA synthetase family. Tetramer of two alpha and two beta subunits.

Its subcellular location is the cytoplasm. The catalysed reaction is tRNA(Gly) + glycine + ATP = glycyl-tRNA(Gly) + AMP + diphosphate. This is Glycine--tRNA ligase beta subunit from Aeromonas salmonicida (strain A449).